The chain runs to 699 residues: eEF1A lysine and N-terminal methyltransferase (699 aa).

Met1 bears the N-acetylmethionine mark. Ser267 is modified (phosphoserine). Residues 433-460 (VSHRAQKKRKKDRKKHRPADTPEDLPAA) are disordered. The segment covering 436 to 449 (RAQKKRKKDRKKHR) has biased composition (basic residues).

This sequence belongs to the methyltransferase superfamily. As to quaternary structure, forms a tripartite complex containing GAB1, METTL13 and SPRY2. Within the complex interacts with GAB1 and SPRY2.

Its subcellular location is the cytoplasm. It localises to the nucleus. It is found in the mitochondrion. The enzyme catalyses L-lysyl-[protein] + S-adenosyl-L-methionine = N(6)-methyl-L-lysyl-[protein] + S-adenosyl-L-homocysteine + H(+). It carries out the reaction N(6)-methyl-L-lysyl-[protein] + S-adenosyl-L-methionine = N(6),N(6)-dimethyl-L-lysyl-[protein] + S-adenosyl-L-homocysteine + H(+). It catalyses the reaction N-terminal glycyl-L-lysyl-L-glutamyl-[protein] + 3 S-adenosyl-L-methionine = N-terminal N,N,N-trimethyl-glycyl-L-lysyl-L-glutamyl-[protein] + 3 S-adenosyl-L-homocysteine + 3 H(+). Functionally, dual methyltransferase that catalyzes methylation of elongation factor 1-alpha (EEF1A1 and EEF1A2) at two different positions, and is therefore involved in the regulation of mRNA translation. Via its C-terminus, methylates EEF1A1 and EEF1A2 at the N-terminal residue 'Gly-2'. Via its N-terminus dimethylates EEF1A1 and EEF1A2 at residue 'Lys-55'. Has no activity towards core histones H2A, H2B, H3 and H4. This Bos taurus (Bovine) protein is eEF1A lysine and N-terminal methyltransferase (METTL13).